We begin with the raw amino-acid sequence, 137 residues long: Transcription antitermination protein NusB (137 aa).

It belongs to the NusB family.

In terms of biological role, involved in transcription antitermination. Required for transcription of ribosomal RNA (rRNA) genes. Binds specifically to the boxA antiterminator sequence of the ribosomal RNA (rrn) operons. This is Transcription antitermination protein NusB from Clavibacter michiganensis subsp. michiganensis (strain NCPPB 382).